The primary structure comprises 736 residues: Elongation factor 2 (736 aa).

A tr-type G domain is found at 18 to 234 (TRVRNIGIIA…VIDAYTASDK (217 aa)). GTP contacts are provided by residues 27-34 (AHVDHGKT), 93-97 (DTPGH), and 147-150 (NKVD). His-603 bears the Diphthamide mark.

Belongs to the TRAFAC class translation factor GTPase superfamily. Classic translation factor GTPase family. EF-G/EF-2 subfamily.

It is found in the cytoplasm. Catalyzes the GTP-dependent ribosomal translocation step during translation elongation. During this step, the ribosome changes from the pre-translocational (PRE) to the post-translocational (POST) state as the newly formed A-site-bound peptidyl-tRNA and P-site-bound deacylated tRNA move to the P and E sites, respectively. Catalyzes the coordinated movement of the two tRNA molecules, the mRNA and conformational changes in the ribosome. This chain is Elongation factor 2, found in Saccharolobus islandicus (strain Y.N.15.51 / Yellowstone #2) (Sulfolobus islandicus).